The primary structure comprises 42 residues: Mating-type M-specific polypeptide Mi (42 aa).

It localises to the cytoplasm. Its subcellular location is the nucleus. Functionally, mating type proteins are sequence specific DNA-binding proteins that act as master switches in yeast differentiation by controlling gene expression in a cell type-specific fashion. Required for meiosis, but plays no role in conjugation. The protein is Mating-type M-specific polypeptide Mi (mat1-Mi) of Schizosaccharomyces pombe (strain 972 / ATCC 24843) (Fission yeast).